A 314-amino-acid chain; its full sequence is MNQLSESYKVRLSKLVPGSVAFFQYLLKRMTHDRVNVNAGYLAYITLLSIVPMLTVLLSILSKFPVFENVGETLQGYIIDNFVPASGDAVRTALQEFVSNTGKMTAVGGAFLFVAALMLISNIDKNLNYIWRVKDKRRPVFSFSMYWMVLTLGPILVGASIAVTSYVTSLKLIENETLTGAYNLFLRWLPLLLSFFAFMGLYFLVPNKKVYLSHGAIGAAIAAVLFELSKKGFAFYITQFPSYQLIYGALAAIPILFVWVYLCWLIVLIGAEVTAALGEREHWSDDLEMIHSTAELQLTDEGSESRDSANSTSQ.

A run of 6 helical transmembrane segments spans residues 41 to 61 (YLAY…LSIL), 104 to 124 (MTAV…SNID), 143 to 163 (FSMY…SIAV), 185 to 205 (FLRW…YFLV), 217 to 237 (IGAA…AFYI), and 249 to 269 (ALAA…IVLI).

The protein belongs to the UPF0761 family.

The protein localises to the cell inner membrane. This chain is UPF0761 membrane protein VIBHAR_00593, found in Vibrio campbellii (strain ATCC BAA-1116).